Here is a 93-residue protein sequence, read N- to C-terminus: MSGLRVYSTSVTGSREIKSQQSEVTRILDGKRIQYQLVDISQDNALRDEMRALAGNPKATPPQIVNGDQYCGDYELFVEAVEQNTLQEFLKLA.

Serine 2 is subject to N-acetylserine. A Glutaredoxin domain is found at 2–93 (SGLRVYSTSV…NTLQEFLKLA (92 aa)). Threonine 9 is a glycosylation site (O-linked (GalNAc...) threonine).

It belongs to the SH3BGR family. As to quaternary structure, homodimer. Interacts with MYO1C (via its IQ motifs); the interaction is dependent on calcium and takes place at membrane ruffles. Post-translationally, may be glycosylated.

It localises to the cytoplasm. The protein resides in the cytosol. It is found in the cell projection. The protein localises to the ruffle membrane. Its subcellular location is the nucleus. In terms of biological role, could act as a modulator of glutaredoxin biological activity. May play a role in cytoskeleton organization. The chain is SH3 domain-binding glutamic acid-rich-like protein 3 (SH3BGRL3) from Bos taurus (Bovine).